The sequence spans 278 residues: Large ribosomal subunit protein uL2 (278 aa).

2 disordered regions span residues 27–57 (STPEKSLVRPLHSKGGRNNAGRVTVRHQGGG) and 224–278 (VAMN…NKKR). Residues 258–278 (RSPKKASSKYIVRRRKTNKKR) show a composition bias toward basic residues.

It belongs to the universal ribosomal protein uL2 family. As to quaternary structure, part of the 50S ribosomal subunit. Forms a bridge to the 30S subunit in the 70S ribosome.

Its function is as follows. One of the primary rRNA binding proteins. Required for association of the 30S and 50S subunits to form the 70S ribosome, for tRNA binding and peptide bond formation. It has been suggested to have peptidyltransferase activity; this is somewhat controversial. Makes several contacts with the 16S rRNA in the 70S ribosome. In Streptomyces avermitilis (strain ATCC 31267 / DSM 46492 / JCM 5070 / NBRC 14893 / NCIMB 12804 / NRRL 8165 / MA-4680), this protein is Large ribosomal subunit protein uL2.